We begin with the raw amino-acid sequence, 1091 residues long: MSAPRYAELQVTTHFSFLRGASSCDELFEQAKNLGIEALGVVDRNSLAAIPRAYEAANNHGVRLVIGCRLDLDDDLSVLVYPMDRAAYGRLCRLLSVGKKRGGKGKCRLSWDDLVAYGEGLIVVLLADLADDLCALRLRRLKAAFADRAYMALSLRRRPNDQMRLFELSGMAQAAGVPTVVTNDVLFHVPERRMLQDVVTCIRHNCTIDEAGFRRERHADRYMKPPEEMHRLFARYPEALSRSLEIAKRCKFSLKELVYQYPEERSLPGLTAQQALEKMVWEAVPGRYPNGLPEKVEKALHHELDVVGRLQYASYFLTVNAIVRYARSKDILCQGRGSAANSVICFVLGITAIDPALFSNLVFERFVSENRGEPPDIDVDFEHQRREEVIQWVYDTYGRDKAALCSVVTRYRGRGALRDVGKVLGLPEDLTKLLSSQVWRWSEGVGEKQVKELNLNMEDRRLKLAFELANQLVGTPRHHSQHPGGFVLSHDRLDELVPIEPAAMNDRQIIEWDKDDIDIVKFMKMDCLALGMLSCMKRGFDLLEARTGEKYDLAAMPPDDPATFAMIQKADTLGTFQIESRAQMSMLPRLKPAKFYDLVIQVAIVRPGPIQGDMVHPYLRRRQGKEPVLYEKPQLENILKKTLGVPLFQEQAMRIAMDCADFTADEADQLRRAMATFKNVGTISKFKEKLVTGMVANGYDKEFAERIFKQLEGFGSYGFPESHAASFALIAYASSWLKCHHPDIFCTAILNSQPMGFYAPAQIVRDARDHGVEVRPVCVNNSRFDCTLEPTGKKNDKGEERFAVRLGLRMVKGLSNDHAADIVAARQDRPFASVDDLWRRAGVPAAALVCLAEADAFLPSLRLARREALWAIKALRDEPLPLFAAAAIRENAVIEELQEPSVALRPMTDGGEVVQDYGHVGLTLREHPMTFLRRDLSRRRIVTCAEAVRVRDGTWLETAGLVLVRQRPGSAKGVIFMTLEDETGIANAVLWVKTFEKYRRVVLSAGMVGIYGKIQREGEVVHLVAHRLTDLSHALASVGERNNAFPLPHGRGDEFHHGMPDDHRAIRKRPPPSNHDDDEVERIKVISRNFH.

Basic and acidic residues predominate over residues 1051-1064 (RGDEFHHGMPDDHR). A disordered region spans residues 1051-1080 (RGDEFHHGMPDDHRAIRKRPPPSNHDDDEV).

The protein belongs to the DNA polymerase type-C family. DnaE2 subfamily.

The protein localises to the cytoplasm. It carries out the reaction DNA(n) + a 2'-deoxyribonucleoside 5'-triphosphate = DNA(n+1) + diphosphate. In terms of biological role, DNA polymerase involved in damage-induced mutagenesis and translesion synthesis (TLS). It is not the major replicative DNA polymerase. This is Error-prone DNA polymerase 1 from Agrobacterium fabrum (strain C58 / ATCC 33970) (Agrobacterium tumefaciens (strain C58)).